The chain runs to 612 residues: MACPF domain-containing protein NSL1 (612 aa).

The 334-residue stretch at 5–338 folds into the MACPF domain; it reads NFTRLDAHSA…PPIEELHQFL (334 aa).

It belongs to the complement C6/C7/C8/C9 (TC 1.C.39) family.

In terms of biological role, negatively controls the salicylic acid (SA)-mediated pathway of programmed cell death in plant immunity. The sequence is that of MACPF domain-containing protein NSL1 (NSL1) from Arabidopsis thaliana (Mouse-ear cress).